The sequence spans 121 residues: Ribosome-binding factor A (121 aa).

This sequence belongs to the RbfA family. As to quaternary structure, monomer. Binds 30S ribosomal subunits, but not 50S ribosomal subunits or 70S ribosomes.

Its subcellular location is the cytoplasm. Functionally, one of several proteins that assist in the late maturation steps of the functional core of the 30S ribosomal subunit. Associates with free 30S ribosomal subunits (but not with 30S subunits that are part of 70S ribosomes or polysomes). Required for efficient processing of 16S rRNA. May interact with the 5'-terminal helix region of 16S rRNA. The polypeptide is Ribosome-binding factor A (Brevibacillus brevis (strain 47 / JCM 6285 / NBRC 100599)).